Reading from the N-terminus, the 232-residue chain is Flagellar L-ring protein (232 aa).

The N-terminal stretch at 1 to 21 (MQKNAAHTYAISSLLVLSLTG) is a signal peptide. A lipid anchor (N-palmitoyl cysteine) is attached at Cys22. Cys22 is lipidated: S-diacylglycerol cysteine.

Belongs to the FlgH family. As to quaternary structure, the basal body constitutes a major portion of the flagellar organelle and consists of four rings (L,P,S, and M) mounted on a central rod.

It is found in the cell outer membrane. It localises to the bacterial flagellum basal body. Its function is as follows. Assembles around the rod to form the L-ring and probably protects the motor/basal body from shearing forces during rotation. The protein is Flagellar L-ring protein of Escherichia coli O7:K1 (strain IAI39 / ExPEC).